Consider the following 742-residue polypeptide: Phosphoribosylformylglycinamidine synthase subunit PurL (742 aa).

His-54 is a catalytic residue. 2 residues coordinate ATP: Tyr-57 and Lys-96. Glu-98 provides a ligand contact to Mg(2+). Substrate contacts are provided by residues 99 to 102 (SHNH) and Arg-121. His-100 functions as the Proton acceptor in the catalytic mechanism. Asp-122 is a Mg(2+) binding site. Residue Gln-245 participates in substrate binding. Asp-273 is a Mg(2+) binding site. 317 to 319 (ESQ) contacts substrate. The ATP site is built by Asp-500 and Gly-537. Asn-538 contacts Mg(2+). Ser-540 serves as a coordination point for substrate.

The protein belongs to the FGAMS family. Monomer. Part of the FGAM synthase complex composed of 1 PurL, 1 PurQ and 2 PurS subunits.

It localises to the cytoplasm. The enzyme catalyses N(2)-formyl-N(1)-(5-phospho-beta-D-ribosyl)glycinamide + L-glutamine + ATP + H2O = 2-formamido-N(1)-(5-O-phospho-beta-D-ribosyl)acetamidine + L-glutamate + ADP + phosphate + H(+). It functions in the pathway purine metabolism; IMP biosynthesis via de novo pathway; 5-amino-1-(5-phospho-D-ribosyl)imidazole from N(2)-formyl-N(1)-(5-phospho-D-ribosyl)glycinamide: step 1/2. Part of the phosphoribosylformylglycinamidine synthase complex involved in the purines biosynthetic pathway. Catalyzes the ATP-dependent conversion of formylglycinamide ribonucleotide (FGAR) and glutamine to yield formylglycinamidine ribonucleotide (FGAM) and glutamate. The FGAM synthase complex is composed of three subunits. PurQ produces an ammonia molecule by converting glutamine to glutamate. PurL transfers the ammonia molecule to FGAR to form FGAM in an ATP-dependent manner. PurS interacts with PurQ and PurL and is thought to assist in the transfer of the ammonia molecule from PurQ to PurL. The sequence is that of Phosphoribosylformylglycinamidine synthase subunit PurL from Geobacillus thermodenitrificans (strain NG80-2).